The primary structure comprises 1409 residues: MSTDTQIIKLVEEILCEKTNDYDYEGPMPDEAELQKRAEDGMKKFATVFAGMSQEVKENALRSCLIHVAGINHRNKVRKHMQVLKDLVGKGIIPARLLCEQIMSSEKLVYQNQSFWIECFQVVRRVIGGVDYKGVREIMKCCKEKALSFPSGISSSILPQMLELTEVIEHIFNRNACLLPAYFIINEIQKADYQDTHWRIANLIANFIEEFVIVAQMLSIIGHSSMLPIVEHSSYADNLINPWKLDPTTLKLALRGNLPYEPELLQPQIKLLRFVLEQPYSRDMVCSMLNLQKTQKQKCMALEEQLVWLVMCAMECSEKEPVHTVDGEISSHTQWVWLHLSSQLIYFVLFQFATFQNIVNTLHDKLAVSNLRRGRDHLMWVLLQYISGSIQRNSITNFLPILKLYDSLYPEKEPLPVPDYNNPLCTHQMAPTCIWIHLLKRAQSEHYNINRSIPTALKLHHEFLQHLVMPNNNATLCMGSDYRLALLCNAYSTNPDYFSRPMAALIETILGNCKNPSAGGGSTSATQPLPTVPLSMSVLDSLTIHSKMSLIHSIVTHMIKQAQSKTTVPNTNNMAPALVETYSRLLVYTEIESLGIKGFLGQLLPQVFKSAAWGILYTLLEMFSYRMHHIQPHYRVQLLSHLHSLASVPHTNQMQLHSCVESTALRLITGLGSVEVQAQMSRYVTEQKAPGNIVSAESEELNRALILTLARSMQITGTGNDPQSTTWCKELLNSIMQNTPHTWSQHTLQCFPPVLNDLVVQHNVPKENKQLLKKSVDEEYRNWTSMSNENDIIGHFGTAGTPGTPPLFLCLLFKMIVETDTISPVAYKILERIGARALSAHLRKLCDYLVFEVSNSGDGAHVNKCVDTINDMIWKYNIITIDRLVLCLSLRTLEGNEAQVSFCIIQLLLLKTSEFRNRLQEFVSINSPEHWKQNNWHERHLAFHQKFPEKFTPDESVSHPSLPVYFGNVCLRFLPVLDITIHRYLEVPAAMSKTLDVLLDHLGPLYKFHDRPITYLYNTLHYYERMLRDRPQLKKRLVGTVIGSLKDVRPDNWAVTEQYQSYMSKKDDAVNWMPDLNYYIYLVRRMQDTIDGTNIFPGTDWRFNEFPNPPAHALYVTCVELLGLPVGPQGVANSLIDVVVKGYPVIPSQSVHNWINTIGLIMAALPESYWGVIYERLREVISCPQMTDWLHRQSPFELFNFKIVREAMLEKNYVVILAIAQSILHHSGIGQISTVTEHIKENFKPIIKTEYQLIYLCHLVGPFLNRLCAERSRAVSDITLILYELLEQVDKAQPSLALKYMDPICDLLYHIKYMFIGDMMKSDLEAIIRRLRPALQMRLRFITRLNVDEIGVDQQNVDASAAGQGPAQGGPQSQQPQTTGQAGGQPSVPQQQQQTQQQQPQQQQQVQQQ.

The segment at 1359–1409 (ASAAGQGPAQGGPQSQQPQTTGQAGGQPSVPQQQQQTQQQQPQQQQQVQQQ) is disordered.

Belongs to the Mediator complex subunit 23 family. As to quaternary structure, component of the Mediator complex.

It localises to the nucleus. Functionally, component of the Mediator complex, a coactivator involved in the regulated transcription of nearly all RNA polymerase II-dependent genes. Mediator functions as a bridge to convey information from gene-specific regulatory proteins to the basal RNA polymerase II transcription machinery. Mediator is recruited to promoters by direct interactions with regulatory proteins and serves as a scaffold for the assembly of a functional preinitiation complex with RNA polymerase II and the general transcription factors. This Aedes aegypti (Yellowfever mosquito) protein is Mediator of RNA polymerase II transcription subunit 23 (MED23).